Consider the following 144-residue polypeptide: Transcription antitermination protein NusB (144 aa).

Belongs to the NusB family.

Functionally, involved in transcription antitermination. Required for transcription of ribosomal RNA (rRNA) genes. Binds specifically to the boxA antiterminator sequence of the ribosomal RNA (rrn) operons. The protein is Transcription antitermination protein NusB of Streptococcus agalactiae serotype Ia (strain ATCC 27591 / A909 / CDC SS700).